The primary structure comprises 382 residues: uncharacterized protein (382 aa).

10 consecutive transmembrane segments (helical) span residues 8–28 (VLLL…LNTL), 41–61 (WQVG…TLIA), 73–93 (SYHC…LTVD), 94–114 (FWSW…IWVI), 133–153 (AAYM…LGIV), 157–177 (LLSV…PLLF), 208–228 (GCII…LYLS), 274–294 (VVIL…ALFI), 325–345 (ALLM…SLLM), and 349–369 (SDNL…MMLL).

The protein belongs to the major facilitator superfamily. YcaD (TC 2.A.1.26) family.

The protein localises to the cell inner membrane. This is an uncharacterized protein from Yersinia pseudotuberculosis serotype O:3 (strain YPIII).